The primary structure comprises 211 residues: Protein-methionine-sulfoxide reductase heme-binding subunit MsrQ (211 aa).

Transmembrane regions (helical) follow at residues 8 to 28, 54 to 74, 82 to 102, 116 to 136, 153 to 173, and 178 to 198; these read VIWLKVCLHLAGLLPFLWLVW, FLLAALLITPLARYAKQPLLI, LWCFAWATLHLTSYALLELGV, PYLTLGIISWVILLALAFTST, FVYLVAILAPIHYLWSVKIIS, and IYAGLAVLLLALRYKKLLSLF.

This sequence belongs to the MsrQ family. In terms of assembly, heterodimer of a catalytic subunit (MsrP) and a heme-binding subunit (MsrQ). The cofactor is FMN. Heme b serves as cofactor.

It is found in the cell inner membrane. Part of the MsrPQ system that repairs oxidized periplasmic proteins containing methionine sulfoxide residues (Met-O), using respiratory chain electrons. Thus protects these proteins from oxidative-stress damage caused by reactive species of oxygen and chlorine generated by the host defense mechanisms. MsrPQ is essential for the maintenance of envelope integrity under bleach stress, rescuing a wide series of structurally unrelated periplasmic proteins from methionine oxidation, including the primary periplasmic chaperone SurA and the lipoprotein Pal. MsrQ provides electrons for reduction to the reductase catalytic subunit MsrP, using the quinone pool of the respiratory chain. The sequence is that of Protein-methionine-sulfoxide reductase heme-binding subunit MsrQ from Shigella flexneri.